Here is a 148-residue protein sequence, read N- to C-terminus: Small ribosomal subunit protein eS19 (148 aa).

It belongs to the eukaryotic ribosomal protein eS19 family. In terms of assembly, part of the 30S ribosomal subunit.

Its function is as follows. May be involved in maturation of the 30S ribosomal subunit. The polypeptide is Small ribosomal subunit protein eS19 (Methanocaldococcus jannaschii (strain ATCC 43067 / DSM 2661 / JAL-1 / JCM 10045 / NBRC 100440) (Methanococcus jannaschii)).